Reading from the N-terminus, the 77-residue chain is Translational regulator CsrA (77 aa).

This sequence belongs to the CsrA/RsmA family. Homodimer; the beta-strands of each monomer intercalate to form a hydrophobic core, while the alpha-helices form wings that extend away from the core.

The protein resides in the cytoplasm. Functionally, a translational regulator that binds mRNA to regulate translation initiation and/or mRNA stability. Usually binds in the 5'-UTR at or near the Shine-Dalgarno sequence preventing ribosome-binding, thus repressing translation. Its main target seems to be the major flagellin gene, while its function is anatagonized by FliW. The polypeptide is Translational regulator CsrA (Desulfitobacterium hafniense (strain Y51)).